A 233-amino-acid polypeptide reads, in one-letter code: MEAMSGLSSPCNCISSLPHSSSTTTRHQNLLFRRNNHHQQKLAAFHSQSHLFSTKCPLISHSLPRKKSFKPHIFLPHLVASMEQVEETYIMIKPDGVQRGLVGEIISRFEKKGFKLIGLKMYPCPKELAEEHYKDLKAKSFYQKLIDYITSGPVVCMAWEGVGVVASSRKLIGATDPLQAEPGTIRGDLAVQTGRNVVHGSDSPDNGKREIGLWFKEGEICQWTPAQAPWLRE.

The N-terminal 67 residues, 1 to 67 (MEAMSGLSSP…LISHSLPRKK (67 aa)), are a transit peptide targeting the chloroplast. Residues K93, F141, R169, T175, R186, and N196 each contribute to the ATP site. The active-site Pros-phosphohistidine intermediate is the H199.

The protein belongs to the NDK family. Mg(2+) serves as cofactor.

The protein localises to the plastid. It is found in the chloroplast. The enzyme catalyses a 2'-deoxyribonucleoside 5'-diphosphate + ATP = a 2'-deoxyribonucleoside 5'-triphosphate + ADP. It carries out the reaction a ribonucleoside 5'-diphosphate + ATP = a ribonucleoside 5'-triphosphate + ADP. Its function is as follows. Major role in the synthesis of nucleoside triphosphates other than ATP. The ATP gamma phosphate is transferred to the NDP beta phosphate via a ping-pong mechanism, using a phosphorylated active-site intermediate. This Spinacia oleracea (Spinach) protein is Nucleoside diphosphate kinase 2, chloroplastic (NDPK2).